The following is an 84-amino-acid chain: Small ribosomal subunit protein bS16 (84 aa).

It belongs to the bacterial ribosomal protein bS16 family.

In Cupriavidus pinatubonensis (strain JMP 134 / LMG 1197) (Cupriavidus necator (strain JMP 134)), this protein is Small ribosomal subunit protein bS16.